Reading from the N-terminus, the 278-residue chain is Polyamine aminopropyltransferase (278 aa).

The PABS domain occupies Glu-5–Lys-238. An S-methyl-5'-thioadenosine-binding site is contributed by Gln-34. Residues His-65 and Asp-89 each contribute to the spermidine site. S-methyl-5'-thioadenosine is bound by residues Glu-109 and Asp-140 to Gly-141. The active-site Proton acceptor is the Asp-158. A spermidine-binding site is contributed by Asp-158–Asp-161. Residue Pro-165 coordinates S-methyl-5'-thioadenosine.

The protein belongs to the spermidine/spermine synthase family. Homodimer or homotetramer.

The protein localises to the cytoplasm. It catalyses the reaction S-adenosyl 3-(methylsulfanyl)propylamine + putrescine = S-methyl-5'-thioadenosine + spermidine + H(+). The protein operates within amine and polyamine biosynthesis; spermidine biosynthesis; spermidine from putrescine: step 1/1. In terms of biological role, catalyzes the irreversible transfer of a propylamine group from the amino donor S-adenosylmethioninamine (decarboxy-AdoMet) to putrescine (1,4-diaminobutane) to yield spermidine. The sequence is that of Polyamine aminopropyltransferase from Caldicellulosiruptor bescii (strain ATCC BAA-1888 / DSM 6725 / KCTC 15123 / Z-1320) (Anaerocellum thermophilum).